Reading from the N-terminus, the 309-residue chain is Foldase protein PrsA 2 (309 aa).

The signal sequence occupies residues 1 to 22 (MKQMNKLITGVVTLATVVTLSA). Cysteine 23 carries the N-palmitoyl cysteine lipid modification. A lipid anchor (S-diacylglycerol cysteine) is attached at cysteine 23. Residues 146 to 241 (TPTMTAEIMQ…RTYHIIKVTK (96 aa)) form the PpiC domain.

This sequence belongs to the PrsA family.

It is found in the cell membrane. It carries out the reaction [protein]-peptidylproline (omega=180) = [protein]-peptidylproline (omega=0). Plays a major role in protein secretion by helping the post-translocational extracellular folding of several secreted proteins. The protein is Foldase protein PrsA 2 (prsA2) of Streptococcus pyogenes serotype M3 (strain ATCC BAA-595 / MGAS315).